We begin with the raw amino-acid sequence, 336 residues long: Glycerol-3-phosphate dehydrogenase [NAD(P)+] (336 aa).

3 residues coordinate NADPH: S11, W12, and K106. Sn-glycerol 3-phosphate is bound by residues K106, G134, and S136. A138 lines the NADPH pocket. Residues K189, D242, S252, R253, and N254 each contribute to the sn-glycerol 3-phosphate site. The active-site Proton acceptor is the K189. R253 is a binding site for NADPH. Positions 277 and 279 each coordinate NADPH.

Belongs to the NAD-dependent glycerol-3-phosphate dehydrogenase family.

The protein resides in the cytoplasm. It catalyses the reaction sn-glycerol 3-phosphate + NAD(+) = dihydroxyacetone phosphate + NADH + H(+). The catalysed reaction is sn-glycerol 3-phosphate + NADP(+) = dihydroxyacetone phosphate + NADPH + H(+). It functions in the pathway membrane lipid metabolism; glycerophospholipid metabolism. Catalyzes the reduction of the glycolytic intermediate dihydroxyacetone phosphate (DHAP) to sn-glycerol 3-phosphate (G3P), the key precursor for phospholipid synthesis. This chain is Glycerol-3-phosphate dehydrogenase [NAD(P)+], found in Agathobacter rectalis (strain ATCC 33656 / DSM 3377 / JCM 17463 / KCTC 5835 / VPI 0990) (Eubacterium rectale).